A 112-amino-acid chain; its full sequence is Cytochrome c (112 aa).

Heme c-binding residues include Cys23, Cys26, His27, and Met89.

It belongs to the cytochrome c family. Post-translationally, binds 1 heme c group covalently per subunit.

Its subcellular location is the mitochondrion intermembrane space. Electron carrier protein. The oxidized form of the cytochrome c heme group can accept an electron from the heme group of the cytochrome c1 subunit of cytochrome reductase. Cytochrome c then transfers this electron to the cytochrome oxidase complex, the final protein carrier in the mitochondrial electron-transport chain. In Chlamydomonas reinhardtii (Chlamydomonas smithii), this protein is Cytochrome c (CYC1).